The chain runs to 275 residues: Testis-specific gene 13 protein (275 aa).

Residues 1-20 (MSQKRQTKFQNGKSKTSENS) show a composition bias toward polar residues. The segment at 1–28 (MSQKRQTKFQNGKSKTSENSSAKREKGM) is disordered.

As to expression, testis-specific.

The protein is Testis-specific gene 13 protein (TSGA13) of Homo sapiens (Human).